The primary structure comprises 341 residues: Phenylalanine--tRNA ligase alpha subunit (341 aa).

Residue E253 participates in Mg(2+) binding.

Belongs to the class-II aminoacyl-tRNA synthetase family. Phe-tRNA synthetase alpha subunit type 1 subfamily. In terms of assembly, tetramer of two alpha and two beta subunits. The cofactor is Mg(2+).

Its subcellular location is the cytoplasm. The catalysed reaction is tRNA(Phe) + L-phenylalanine + ATP = L-phenylalanyl-tRNA(Phe) + AMP + diphosphate + H(+). The protein is Phenylalanine--tRNA ligase alpha subunit of Methylococcus capsulatus (strain ATCC 33009 / NCIMB 11132 / Bath).